We begin with the raw amino-acid sequence, 146 residues long: Small ribosomal subunit protein uS13 (146 aa).

Residues 119–146 (ARGKKVRGQRTRSTGRKGRTVGVVRRKR) form a disordered region.

The protein belongs to the universal ribosomal protein uS13 family. In terms of assembly, part of the 30S ribosomal subunit. Forms a loose heterodimer with protein S19. Forms two bridges to the 50S subunit in the 70S ribosome.

In terms of biological role, located at the top of the head of the 30S subunit, it contacts several helices of the 16S rRNA. In the 70S ribosome it contacts the 23S rRNA (bridge B1a) and protein L5 of the 50S subunit (bridge B1b), connecting the 2 subunits; these bridges are implicated in subunit movement. The protein is Small ribosomal subunit protein uS13 of Archaeoglobus fulgidus (strain ATCC 49558 / DSM 4304 / JCM 9628 / NBRC 100126 / VC-16).